The primary structure comprises 311 residues: Methionyl-tRNA formyltransferase (311 aa).

(6S)-5,6,7,8-tetrahydrofolate is bound at residue 109 to 112; it reads SLLP.

It belongs to the Fmt family.

It carries out the reaction L-methionyl-tRNA(fMet) + (6R)-10-formyltetrahydrofolate = N-formyl-L-methionyl-tRNA(fMet) + (6S)-5,6,7,8-tetrahydrofolate + H(+). In terms of biological role, attaches a formyl group to the free amino group of methionyl-tRNA(fMet). The formyl group appears to play a dual role in the initiator identity of N-formylmethionyl-tRNA by promoting its recognition by IF2 and preventing the misappropriation of this tRNA by the elongation apparatus. The sequence is that of Methionyl-tRNA formyltransferase from Staphylococcus aureus (strain USA300).